Here is a 134-residue protein sequence, read N- to C-terminus: Profilin-4 (134 aa).

The cysteines at positions 13 and 118 are disulfide-linked. Residues 84 to 100 (AVIRGKKGSGGITIKKT) carry the Involved in PIP2 interaction motif. Thr114 carries the phosphothreonine modification.

This sequence belongs to the profilin family. As to quaternary structure, occurs in many kinds of cells as a complex with monomeric actin in a 1:1 ratio. Post-translationally, phosphorylated by MAP kinases.

The protein resides in the cytoplasm. Its subcellular location is the cytoskeleton. In terms of biological role, binds to actin and affects the structure of the cytoskeleton. At high concentrations, profilin prevents the polymerization of actin, whereas it enhances it at low concentrations. This is Profilin-4 from Olea europaea (Common olive).